We begin with the raw amino-acid sequence, 242 residues long: Capsid protein (242 aa).

A Bipartite nuclear localization signal motif is present at residues 1–42 (MPYKRKLTSYFPQSKRFRGAKSGMAVVKTSASRRLYKKGKRK).

It belongs to the geminiviridae capsid protein family. In terms of assembly, homomultimer. Binds to single-stranded and double-stranded viral DNA. Interacts (via nuclear localization signal) with host importin alpha-1a.

The protein resides in the virion. It is found in the host nucleus. Its function is as follows. Encapsidates the viral genome into characteristic twinned ('geminate') particles. Binds the genomic viral ssDNA and shuttles it into and out of the cell nucleus. Plays a role in protection of the genome from degradation, virus acquisition and transmission by insect vectors, infectivity, and systemic movement. The CP of monopartite geminiviruses is absolutely essential for virus movement. The sequence is that of Capsid protein from Solanum lycopersicum (Tomato).